Here is a 620-residue protein sequence, read N- to C-terminus: Nuclear cap-binding protein subunit 3 (620 aa).

Lysine 12 is covalently cross-linked (Glycyl lysine isopeptide (Lys-Gly) (interchain with G-Cter in SUMO2)). The segment covering 15–28 (APAGPALGLPSPEA) has biased composition (low complexity). The tract at residues 15–42 (APAGPALGLPSPEAESGVDRGEPEPMEV) is disordered. Position 25 is a phosphoserine (serine 25). A Glycyl lysine isopeptide (Lys-Gly) (interchain with G-Cter in SUMO2) cross-link involves residue lysine 70. Position 73 is a phosphoserine (serine 73). The segment at 126 to 187 (ETIYICGVDE…MSSLPAQDKI (62 aa)) is RNA recognition motif (RRM) domain. Positions 155–158 (WLDD) match the WLDD motif; essential for 7-methylguanosine-containing mRNA cap binding motif. The segment covering 185–198 (DKIRSRDASEDKSA) has biased composition (basic and acidic residues). Disordered stretches follow at residues 185–233 (DKIR…LDTL), 332–419 (HSGL…PKKS), and 436–620 (IRNS…EAES). Lysine 186 is covalently cross-linked (Glycyl lysine isopeptide (Lys-Gly) (interchain with G-Cter in SUMO2)). A phosphoserine mark is found at serine 209 and serine 210. Acidic residues-rich tracts occupy residues 209–230 (SSDD…DVEL) and 341–365 (EPIE…DMDA). Residues 366–388 (DDRVVVEYHEELPALKQPRERSA) show a composition bias toward basic and acidic residues. Threonine 413 carries the phosphothreonine modification. Serine 415 carries the post-translational modification Phosphoserine. 2 stretches are compositionally biased toward basic and acidic residues: residues 459–474 (PPEK…DEKR) and 511–521 (VRREPSSDVHS). Residue lysine 541 forms a Glycyl lysine isopeptide (Lys-Gly) (interchain with G-Cter in SUMO2) linkage. Basic and acidic residues-rich tracts occupy residues 554–569 (KTKE…RAPG) and 585–598 (IKEK…KSRL). Over residues 611–620 (ESSSGSEAES) the composition is skewed to low complexity. The residue at position 620 (serine 620) is a Phosphoserine.

The protein belongs to the NCBP3 family. In terms of assembly, component of an alternative cap-binding complex (CBC) composed of NCBP1/CBP80 and NCBP3. Interacts with SRRT, KPNA3, THOC5 and EIF4A3.

The protein resides in the nucleus. It is found in the cytoplasm. In terms of biological role, associates with NCBP1/CBP80 to form an alternative cap-binding complex (CBC) which plays a key role in mRNA export. NCBP3 serves as adapter protein linking the capped RNAs (m7GpppG-capped RNA) to NCBP1/CBP80. Unlike the conventional CBC with NCBP2 which binds both small nuclear RNA (snRNA) and messenger (mRNA) and is involved in their export from the nucleus, the alternative CBC with NCBP3 does not bind snRNA and associates only with mRNA thereby playing a role in only mRNA export. The alternative CBC is particularly important in cellular stress situations such as virus infections and the NCBP3 activity is critical to inhibit virus growth. The polypeptide is Nuclear cap-binding protein subunit 3 (Homo sapiens (Human)).